The following is a 443-amino-acid chain: Protein FAM83A (443 aa).

The disordered stretch occupies residues 311 to 403 (DSGVSVMTDS…YYQRNYAPDS (93 aa)). Polar residues predominate over residues 315–326 (SVMTDSTPESVN). Low complexity-rich tracts occupy residues 327–344 (TTSE…SNDS) and 388–399 (SNYQPNYYQRNY).

The protein belongs to the FAM83 family.

The protein localises to the cytoplasm. In terms of biological role, may function in the epidermal growth factor receptor/EGFR signaling pathway. The polypeptide is Protein FAM83A (Xenopus laevis (African clawed frog)).